The sequence spans 376 residues: Putative E3 ubiquitin-protein ligase XBAT34 (376 aa).

ANK repeat units lie at residues 41–71 (LGRT…NVNA) and 77–106 (NGGT…NPLV). Residues 325–364 (CVICVDAPSEAVCVPCGHVAGCISCLKEIENKKMGCPVCR) form an RING-type zinc finger.

The enzyme catalyses S-ubiquitinyl-[E2 ubiquitin-conjugating enzyme]-L-cysteine + [acceptor protein]-L-lysine = [E2 ubiquitin-conjugating enzyme]-L-cysteine + N(6)-ubiquitinyl-[acceptor protein]-L-lysine.. It participates in protein modification; protein ubiquitination. No E3 ubiquitin-protein ligase activity observed when associated with the E2 enzyme UBC8 in vitro. The chain is Putative E3 ubiquitin-protein ligase XBAT34 (XBAT34) from Arabidopsis thaliana (Mouse-ear cress).